A 413-amino-acid chain; its full sequence is Arginine biosynthesis bifunctional protein ArgJ (413 aa).

Substrate-binding residues include threonine 158, lysine 184, threonine 195, glutamate 285, asparagine 408, and serine 413. Catalysis depends on threonine 195, which acts as the Nucleophile.

The protein belongs to the ArgJ family. As to quaternary structure, heterotetramer of two alpha and two beta chains.

It localises to the cytoplasm. It catalyses the reaction N(2)-acetyl-L-ornithine + L-glutamate = N-acetyl-L-glutamate + L-ornithine. It carries out the reaction L-glutamate + acetyl-CoA = N-acetyl-L-glutamate + CoA + H(+). The protein operates within amino-acid biosynthesis; L-arginine biosynthesis; L-ornithine and N-acetyl-L-glutamate from L-glutamate and N(2)-acetyl-L-ornithine (cyclic): step 1/1. It functions in the pathway amino-acid biosynthesis; L-arginine biosynthesis; N(2)-acetyl-L-ornithine from L-glutamate: step 1/4. Catalyzes two activities which are involved in the cyclic version of arginine biosynthesis: the synthesis of N-acetylglutamate from glutamate and acetyl-CoA as the acetyl donor, and of ornithine by transacetylation between N(2)-acetylornithine and glutamate. This is Arginine biosynthesis bifunctional protein ArgJ from Bradyrhizobium diazoefficiens (strain JCM 10833 / BCRC 13528 / IAM 13628 / NBRC 14792 / USDA 110).